We begin with the raw amino-acid sequence, 193 residues long: Putative RNA methyltransferase At5g10620 (193 aa).

S-adenosyl-L-methionine contacts are provided by residues Leu110, Gly142, and 161-166 (LSSMVL).

It belongs to the RNA methyltransferase RlmH family.

In Arabidopsis thaliana (Mouse-ear cress), this protein is Putative RNA methyltransferase At5g10620.